The primary structure comprises 245 residues: Biosynthetic peptidoglycan transglycosylase (245 aa).

The chain crosses the membrane as a helical span at residues 19–39 (IVYAGAVFAAAWLATQLFYFV).

The protein belongs to the glycosyltransferase 51 family.

The protein localises to the cell inner membrane. The catalysed reaction is [GlcNAc-(1-&gt;4)-Mur2Ac(oyl-L-Ala-gamma-D-Glu-L-Lys-D-Ala-D-Ala)](n)-di-trans,octa-cis-undecaprenyl diphosphate + beta-D-GlcNAc-(1-&gt;4)-Mur2Ac(oyl-L-Ala-gamma-D-Glu-L-Lys-D-Ala-D-Ala)-di-trans,octa-cis-undecaprenyl diphosphate = [GlcNAc-(1-&gt;4)-Mur2Ac(oyl-L-Ala-gamma-D-Glu-L-Lys-D-Ala-D-Ala)](n+1)-di-trans,octa-cis-undecaprenyl diphosphate + di-trans,octa-cis-undecaprenyl diphosphate + H(+). The protein operates within cell wall biogenesis; peptidoglycan biosynthesis. In terms of biological role, peptidoglycan polymerase that catalyzes glycan chain elongation from lipid-linked precursors. The protein is Biosynthetic peptidoglycan transglycosylase of Burkholderia multivorans (strain ATCC 17616 / 249).